The primary structure comprises 118 residues: Small ribosomal subunit protein uS13 (118 aa).

The interval 94 to 118 (GLPVRGQRTKTNARTRKGPRKPIKK) is disordered.

Belongs to the universal ribosomal protein uS13 family. Part of the 30S ribosomal subunit. Forms a loose heterodimer with protein S19. Forms two bridges to the 50S subunit in the 70S ribosome.

In terms of biological role, located at the top of the head of the 30S subunit, it contacts several helices of the 16S rRNA. In the 70S ribosome it contacts the 23S rRNA (bridge B1a) and protein L5 of the 50S subunit (bridge B1b), connecting the 2 subunits; these bridges are implicated in subunit movement. Contacts the tRNAs in the A and P-sites. The chain is Small ribosomal subunit protein uS13 from Tolumonas auensis (strain DSM 9187 / NBRC 110442 / TA 4).